The chain runs to 466 residues: MALEKLLRSIPKVDEILKAPELQDYLNRYQREIITRKVREVLDELRTGIVSGQRQKPLEFQEVVNLAQRKIESFFLPPYRRVVNGTGVVLHTNLGRAPLAPEAVEALRKVSGSYGNLELDLTTGKRGSRYDHVVEYLCELTGAEDALVVNNNASAVVLALSSMAFGKEVIVSRGQLVEIGGAFRIPEIMERSGAILKEVGTTNKTRIDDYRKAINENTGLLLGVHTSNYKIIGFTESVEIADLVKLGKEKGIPVMWDLGSGSLVDLTSYGLPYEPTVQEVLAAGVDVVTFSGDKLLGGPQAGIIAGKKEFVAKMKKHPLTRAIRIDKMTVAALQATLMLYFERDFLSKIPVLRMLTEPPEKIKKRAQKLYRKLLRAKLPAEISLDEGKSEVGGGAFPGTYLSSYVIKINPHHLSVEKLAKALREENPALLGRIEEEKFIIDLRTVLEEEIDYCKRLLEKHLVGDRQ.

K294 is modified (N6-(pyridoxal phosphate)lysine).

The protein belongs to the SelA family. The cofactor is pyridoxal 5'-phosphate.

Its subcellular location is the cytoplasm. The enzyme catalyses L-seryl-tRNA(Sec) + selenophosphate + H(+) = L-selenocysteinyl-tRNA(Sec) + phosphate. It participates in aminoacyl-tRNA biosynthesis; selenocysteinyl-tRNA(Sec) biosynthesis; selenocysteinyl-tRNA(Sec) from L-seryl-tRNA(Sec) (bacterial route): step 1/1. In terms of biological role, converts seryl-tRNA(Sec) to selenocysteinyl-tRNA(Sec) required for selenoprotein biosynthesis. The polypeptide is L-seryl-tRNA(Sec) selenium transferase (Carboxydothermus hydrogenoformans (strain ATCC BAA-161 / DSM 6008 / Z-2901)).